The chain runs to 249 residues: MKLVQDKITIITGGTRGIGFAAAKLFIENGAKVSIFGETQEEVDTALAQLKELYPEEEVLGFAPDLTSRDAVMAAVGTVAQKYGRLDVMINNAGITMNSVFSRVSEEDFKNIMDINVNGVFNGAWSAYQCMKDAKQGVIINTASVTGIYGSLSGIGYPTSKAGVIGLTHGLGREIIRKNIRVVGVAPGVVDTDMTKGLPPEILEDYLKTLPMKRMLKPEEIANVYLFLASDLASGITATTISVDGAYRP.

NAD(+) is bound by residues 15-18 (TRGI), Glu38, Glu42, and Asn92. Ser144 serves as a coordination point for substrate. Active-site proton donor/acceptor residues include Tyr157 and Lys161. NAD(+)-binding positions include Lys161 and 190–192 (VDT).

The protein belongs to the short-chain dehydrogenases/reductases (SDR) family. In terms of assembly, homotetramer.

The enzyme catalyses a 3alpha-hydroxy bile acid CoA + NAD(+) = a 3-oxo bile acid CoA + NADH + H(+). It carries out the reaction choloyl-CoA + NAD(+) = 7alpha,12alpha-dihydroxy-3-oxochol-24-oyl-CoA + NADH + H(+). It catalyses the reaction chenodeoxycholoyl-CoA + NAD(+) = 7alpha-hydroxy-3-oxochol-24-oyl-CoA + NADH + H(+). The catalysed reaction is deoxycholoyl-CoA + NAD(+) = 12alpha-hydroxy-3-oxocholan-24-oyl-CoA + NADH + H(+). The enzyme catalyses lithocholoyl-CoA + NAD(+) = 3-oxocholan-24-oyl-CoA + NADH + H(+). Its pathway is lipid metabolism; bile acid biosynthesis. Functionally, involved in the multi-step bile acid 7alpha-dehydroxylation pathway that transforms primary bile acids to secondary bile acids in the human gut. Catalyzes the oxidation of C3-hydroxyl group of CoA conjugated bile acids generating a C3-oxo bile acid intermediate. Can use choloyl-CoA, chenodeoxycholoyl-CoA, deoxycholoyl-CoA, and lithocholoyl-CoA as substrates with similar efficiency. Highly prefers NAD over NADP as cosubstrate. Also catalyzes the reverse reactions; in vitro, the preferred direction of reaction depends on the pH. Has very little activity with unconjugated (non-CoA) bile acid substrates. In Clostridium scindens (strain JCM 10418 / VPI 12708), this protein is 3alpha-hydroxy bile acid-CoA-ester 3-dehydrogenase 1/3 (baiA1).